A 423-amino-acid chain; its full sequence is Gamma-glutamyl phosphate reductase (423 aa).

It belongs to the gamma-glutamyl phosphate reductase family.

The protein localises to the cytoplasm. It carries out the reaction L-glutamate 5-semialdehyde + phosphate + NADP(+) = L-glutamyl 5-phosphate + NADPH + H(+). It participates in amino-acid biosynthesis; L-proline biosynthesis; L-glutamate 5-semialdehyde from L-glutamate: step 2/2. Catalyzes the NADPH-dependent reduction of L-glutamate 5-phosphate into L-glutamate 5-semialdehyde and phosphate. The product spontaneously undergoes cyclization to form 1-pyrroline-5-carboxylate. The sequence is that of Gamma-glutamyl phosphate reductase from Burkholderia orbicola (strain AU 1054).